We begin with the raw amino-acid sequence, 309 residues long: NmrA-like family domain-containing protein 1 (309 aa).

NADP(+) contacts are provided by residues 11 to 16 (GATGAQ), 37 to 41 (RNPEQ), 58 to 59 (DQ), 79 to 81 (TNY), Lys-102, Lys-143, and 165 to 168 (YFEN). The segment at 163 to 199 (PCYFENLLSYFLPQKAADGKSFLLDLPMGDVPMDGMS) is interaction with ASS1.

Belongs to the NmrA-type oxidoreductase family. Homodimer. Interacts with ASS1. Interaction is enhanced by low NADPH/NADP(+) ratios, which results in inhibition of ASS1 activity.

It localises to the cytoplasm. The protein resides in the perinuclear region. It is found in the nucleus. Its function is as follows. Redox sensor protein. Undergoes restructuring and subcellular redistribution in response to changes in intracellular NADPH/NADP(+) levels. At low NADPH concentrations the protein is found mainly as a monomer, and binds argininosuccinate synthase (ASS1), the enzyme involved in nitric oxide synthesis. Association with ASS1 impairs its activity and reduces the production of nitric oxide, which subsecuently prevents apoptosis. Under normal NADPH concentrations, the protein is found as a dimer and hides the binding site for ASS1. The homodimer binds one molecule of NADPH. Has higher affinity for NADPH than for NADP(+). Binding to NADPH is necessary to form a stable dimer. This chain is NmrA-like family domain-containing protein 1 (Nmral1), found in Mus musculus (Mouse).